We begin with the raw amino-acid sequence, 281 residues long: Formamidopyrimidine-DNA glycosylase (281 aa).

The Schiff-base intermediate with DNA role is filled by Pro2. Glu3 (proton donor) is an active-site residue. The Proton donor; for beta-elimination activity role is filled by Lys58. DNA contacts are provided by His100, Arg119, and Arg160. An FPG-type zinc finger spans residues 245-281; that stretch reads RVYGREGAPCPTPGCTGTVQRIVQSGRSSFFCPLCQQ. Arg271 serves as the catalytic Proton donor; for delta-elimination activity.

It belongs to the FPG family. In terms of assembly, monomer. It depends on Zn(2+) as a cofactor.

It carries out the reaction Hydrolysis of DNA containing ring-opened 7-methylguanine residues, releasing 2,6-diamino-4-hydroxy-5-(N-methyl)formamidopyrimidine.. The enzyme catalyses 2'-deoxyribonucleotide-(2'-deoxyribose 5'-phosphate)-2'-deoxyribonucleotide-DNA = a 3'-end 2'-deoxyribonucleotide-(2,3-dehydro-2,3-deoxyribose 5'-phosphate)-DNA + a 5'-end 5'-phospho-2'-deoxyribonucleoside-DNA + H(+). Its function is as follows. Involved in base excision repair of DNA damaged by oxidation or by mutagenic agents. Acts as a DNA glycosylase that recognizes and removes damaged bases. Has a preference for oxidized purines, such as 7,8-dihydro-8-oxoguanine (8-oxoG). Has AP (apurinic/apyrimidinic) lyase activity and introduces nicks in the DNA strand. Cleaves the DNA backbone by beta-delta elimination to generate a single-strand break at the site of the removed base with both 3'- and 5'-phosphates. The sequence is that of Formamidopyrimidine-DNA glycosylase from Paracoccus denitrificans (strain Pd 1222).